The following is a 273-amino-acid chain: WIMGHMVNAIAQIDEFVNLGANSIETDVSFDDSANPEYTYHGVPCDCGRTCTKWEYFNEFLKGLRKATTPGDSKYHEKLVLVVFDLKTSSLYDNQASDAGKKLAKSLLQNYWNNGNNGGRAYIVLSIPNLAHYKLIAGFKETLTSEGHPELMDKVGYDFSGNDEIGDVAKTYKKAGVTGHVWQSDGITNCLLRGLDRVRKAVANRDSSNGYINKVYYWTVDKRATTRDALDAGVDGIMTNYPDVIAGVLNESAYKAKFRIASYDDNPWETFKN.

Residue His-5 is part of the active site. Mg(2+) contacts are provided by Glu-25 and Asp-27. The active-site Nucleophile is the His-41. Intrachain disulfides connect Cys-45/Cys-51 and Cys-47/Cys-190. Mg(2+) is bound at residue Asp-85. Asn-250 carries an N-linked (GlcNAc...) asparagine glycan.

This sequence belongs to the arthropod phospholipase D family. Class II subfamily. Mg(2+) serves as cofactor. Expressed by the venom gland.

Its subcellular location is the secreted. It carries out the reaction an N-(acyl)-sphingosylphosphocholine = an N-(acyl)-sphingosyl-1,3-cyclic phosphate + choline. The catalysed reaction is an N-(acyl)-sphingosylphosphoethanolamine = an N-(acyl)-sphingosyl-1,3-cyclic phosphate + ethanolamine. It catalyses the reaction a 1-acyl-sn-glycero-3-phosphocholine = a 1-acyl-sn-glycero-2,3-cyclic phosphate + choline. The enzyme catalyses a 1-acyl-sn-glycero-3-phosphoethanolamine = a 1-acyl-sn-glycero-2,3-cyclic phosphate + ethanolamine. In terms of biological role, dermonecrotic toxins cleave the phosphodiester linkage between the phosphate and headgroup of certain phospholipids (sphingolipid and lysolipid substrates), forming an alcohol (often choline) and a cyclic phosphate. This toxin acts on sphingomyelin (SM). It may also act on ceramide phosphoethanolamine (CPE), lysophosphatidylcholine (LPC) and lysophosphatidylethanolamine (LPE), but not on lysophosphatidylserine (LPS), and lysophosphatidylglycerol (LPG). It acts by transphosphatidylation, releasing exclusively cyclic phosphate products as second products. Induces dermonecrosis, hemolysis, increased vascular permeability, edema, inflammatory response, and platelet aggregation. In Loxosceles deserta (Desert recluse spider), this protein is Dermonecrotic toxin LdSicTox-alphaIB1avi.